Consider the following 165-residue polypeptide: Austinoid biosynthesis cluster protein J (165 aa).

The protein belongs to the trt14 isomerase family. Homodimer.

It participates in secondary metabolite biosynthesis; terpenoid biosynthesis. Its function is as follows. Part of the gene cluster that mediates the biosynthesis of calidodehydroaustin, a fungal meroterpenoid. The first step of the pathway is the synthesis of 3,5-dimethylorsellinic acid by the polyketide synthase ausA. 3,5-dimethylorsellinic acid is then prenylated by the polyprenyl transferase ausN. Further epoxidation by the FAD-dependent monooxygenase ausM and cyclization by the probable terpene cyclase ausL lead to the formation of protoaustinoid A. Protoaustinoid A is then oxidized to spiro-lactone preaustinoid A3 by the combined action of the FAD-binding monooxygenases ausB and ausC, and the dioxygenase ausE. Acid-catalyzed keto-rearrangement and ring contraction of the tetraketide portion of preaustinoid A3 by ausJ lead to the formation of preaustinoid A4. The aldo-keto reductase ausK, with the help of ausH, is involved in the next step by transforming preaustinoid A4 into isoaustinone which is in turn hydroxylated by the P450 monooxygenase ausI to form austinolide. The cytochrome P450 monooxygenase ausG modifies austinolide to austinol. Austinol is further acetylated to austin by the O-acetyltransferase ausP, which spontaneously changes to dehydroaustin. The cytochrome P450 monooxygenase ausR then converts dehydroaustin is into 7-dehydrodehydroaustin. The hydroxylation catalyzed by ausR permits the O-acetyltransferase ausQ to add an additional acetyl group to the molecule, leading to the formation of acetoxydehydroaustin. The short chain dehydrogenase ausT catalyzes the reduction of the double bond present between carbon atoms 1 and 2 to convert 7-dehydrodehydroaustin into 1,2-dihydro-7-hydroxydehydroaustin. AusQ catalyzes not only an acetylation reaction but also the addition of the PKS ausV diketide product to 1,2-dihydro-7-hydroxydehydroaustin, forming precalidodehydroaustin. Finally, the iron/alpha-ketoglutarate-dependent dioxygenase converts precalidodehydroaustin into calidodehydroaustin. In Aspergillus calidoustus, this protein is Austinoid biosynthesis cluster protein J.